The sequence spans 181 residues: ATP-dependent protease subunit HslV (181 aa).

Thr7 is an active-site residue. Na(+) is bound by residues Ala162, Cys165, and Thr168.

This sequence belongs to the peptidase T1B family. HslV subfamily. As to quaternary structure, a double ring-shaped homohexamer of HslV is capped on each side by a ring-shaped HslU homohexamer. The assembly of the HslU/HslV complex is dependent on binding of ATP.

Its subcellular location is the cytoplasm. The catalysed reaction is ATP-dependent cleavage of peptide bonds with broad specificity.. With respect to regulation, allosterically activated by HslU binding. Protease subunit of a proteasome-like degradation complex believed to be a general protein degrading machinery. The polypeptide is ATP-dependent protease subunit HslV (Coxiella burnetii (strain Dugway 5J108-111)).